We begin with the raw amino-acid sequence, 294 residues long: Cytidine deaminase (294 aa).

2 consecutive CMP/dCMP-type deaminase domains span residues 48–168 and 186–294; these read DEDA…FGPK and LTGD…VLLA. Substrate is bound at residue 89 to 91; the sequence is NME. Position 102 (H102) interacts with Zn(2+). E104 serves as the catalytic Proton donor. Zn(2+) is bound by residues C129 and C132.

This sequence belongs to the cytidine and deoxycytidylate deaminase family. In terms of assembly, homodimer. Zn(2+) is required as a cofactor.

It catalyses the reaction cytidine + H2O + H(+) = uridine + NH4(+). The catalysed reaction is 2'-deoxycytidine + H2O + H(+) = 2'-deoxyuridine + NH4(+). Functionally, this enzyme scavenges exogenous and endogenous cytidine and 2'-deoxycytidine for UMP synthesis. The protein is Cytidine deaminase of Escherichia coli O157:H7.